The chain runs to 373 residues: Flap endonuclease 1 (373 aa).

The interval 1 to 105 is N-domain; sequence MGIKGLNALI…GELEKRLKRR (105 aa). Asp-34 contributes to the Mg(2+) binding site. Positions 47 and 71 each coordinate DNA. Residues Asp-87, Glu-159, Glu-161, Asp-180, and Asp-182 each coordinate Mg(2+). Positions 123 to 254 are I-domain; the sequence is DIAKFERRTV…VTAFKLIKEH (132 aa). Glu-159 serves as a coordination point for DNA. DNA contacts are provided by Gly-232 and Asp-234. Asp-234 serves as a coordination point for Mg(2+). Positions 340–348 are interaction with PCNA; the sequence is TQGRLDKFF. The interval 347 to 373 is disordered; sequence FFVVKKRPAEEKKGKNTKEEKPKKKRK.

It belongs to the XPG/RAD2 endonuclease family. FEN1 subfamily. As to quaternary structure, interacts with PCNA. Three molecules of FEN1 bind to one PCNA trimer with each molecule binding to one PCNA monomer. PCNA stimulates the nuclease activity without altering cleavage specificity. The cofactor is Mg(2+). In terms of processing, phosphorylated. Phosphorylation upon DNA damage induces relocalization to the nuclear plasma.

The protein resides in the nucleus. The protein localises to the nucleolus. It localises to the nucleoplasm. Its subcellular location is the mitochondrion. Functionally, structure-specific nuclease with 5'-flap endonuclease and 5'-3' exonuclease activities involved in DNA replication and repair. During DNA replication, cleaves the 5'-overhanging flap structure that is generated by displacement synthesis when DNA polymerase encounters the 5'-end of a downstream Okazaki fragment. It enters the flap from the 5'-end and then tracks to cleave the flap base, leaving a nick for ligation. Also involved in the long patch base excision repair (LP-BER) pathway, by cleaving within the apurinic/apyrimidinic (AP) site-terminated flap. Acts as a genome stabilization factor that prevents flaps from equilibrating into structures that lead to duplications and deletions. Also possesses 5'-3' exonuclease activity on nicked or gapped double-stranded DNA, and exhibits RNase H activity. Also involved in replication and repair of rDNA and in repairing mitochondrial DNA. In Komagataella phaffii (strain GS115 / ATCC 20864) (Yeast), this protein is Flap endonuclease 1.